A 338-amino-acid chain; its full sequence is 5-dehydro-2-deoxygluconokinase (338 aa).

Belongs to the carbohydrate kinase PfkB family.

It catalyses the reaction 5-dehydro-2-deoxy-D-gluconate + ATP = 6-phospho-5-dehydro-2-deoxy-D-gluconate + ADP + H(+). It participates in polyol metabolism; myo-inositol degradation into acetyl-CoA; acetyl-CoA from myo-inositol: step 5/7. Catalyzes the phosphorylation of 5-dehydro-2-deoxy-D-gluconate (2-deoxy-5-keto-D-gluconate or DKG) to 6-phospho-5-dehydro-2-deoxy-D-gluconate (DKGP). The chain is 5-dehydro-2-deoxygluconokinase from Mesomycoplasma hyopneumoniae (strain 7448) (Mycoplasma hyopneumoniae).